We begin with the raw amino-acid sequence, 404 residues long: Glucose-1-phosphate adenylyltransferase (404 aa).

Residues Tyr99, Gly164, 179 to 180 (EK), and Ser197 each bind alpha-D-glucose 1-phosphate.

The protein belongs to the bacterial/plant glucose-1-phosphate adenylyltransferase family.

The enzyme catalyses alpha-D-glucose 1-phosphate + ATP + H(+) = ADP-alpha-D-glucose + diphosphate. The protein operates within capsule biogenesis; capsule polysaccharide biosynthesis. It participates in glycan biosynthesis; glycogen biosynthesis. In terms of biological role, involved in the biosynthesis of ADP-glucose, a building block, required in the biosynthesis of maltose-1-phosphate (M1P) and in the elongation reactions to produce linear alpha-1,4-glucans. Catalyzes the reaction between ATP and alpha-D-glucose 1-phosphate (G1P) to produce pyrophosphate and ADP-Glc. The sequence is that of Glucose-1-phosphate adenylyltransferase from Mycolicibacterium paratuberculosis (strain ATCC BAA-968 / K-10) (Mycobacterium paratuberculosis).